The following is a 450-amino-acid chain: Glucose-6-phosphate isomerase (450 aa).

The Proton donor role is filled by Glu-291. Catalysis depends on residues His-312 and Lys-426.

Belongs to the GPI family.

It localises to the cytoplasm. It catalyses the reaction alpha-D-glucose 6-phosphate = beta-D-fructose 6-phosphate. It functions in the pathway carbohydrate biosynthesis; gluconeogenesis. It participates in carbohydrate degradation; glycolysis; D-glyceraldehyde 3-phosphate and glycerone phosphate from D-glucose: step 2/4. In terms of biological role, catalyzes the reversible isomerization of glucose-6-phosphate to fructose-6-phosphate. This Clostridium perfringens (strain ATCC 13124 / DSM 756 / JCM 1290 / NCIMB 6125 / NCTC 8237 / Type A) protein is Glucose-6-phosphate isomerase.